The following is a 648-amino-acid chain: Interferon-induced GTP-binding protein Mx1 (648 aa).

Methionine 1 is modified (N-acetylmethionine). The segment at 1 to 26 is disordered; it reads MVHSDLGIEELDSPESSLNGSEDMES. Residues 56-329 form the Dynamin-type G domain; sequence DLALPAIAVI…LIMHICKTLP (274 aa). Residues 66 to 73 are G1 motif; it reads GDQSSGKS. Residue 66–73 participates in GTP binding; that stretch reads GDQSSGKS. A G2 motif region spans residues 91–93; sequence VTR. The segment at 167 to 170 is G3 motif; it reads DLPG. GTP contacts are provided by residues 167–171 and 236–239; these read DLPGI and TKPD. The interval 236–239 is G4 motif; the sequence is TKPD. A G5 motif region spans residues 268–271; sequence KCRG. The bundle signaling element (BSE) stretch occupies residues 330 to 355; that stretch reads LLENQIKETHQRITEELQKYGKDIPE. Positions 355–522 are middle domain; it reads EEESEKMFCL…HFQMEQLVYC (168 aa). The stalk stretch occupies residues 356-618; it reads EESEKMFCLI…KDQYDWLLKE (263 aa). Positions 543 to 546 are critical for lipid-binding; that stretch reads KNKK. The region spanning 560 to 648 is the GED domain; it reads TDEIFQHLTA…ARQRLAKFPG (89 aa).

Belongs to the TRAFAC class dynamin-like GTPase superfamily. Dynamin/Fzo/YdjA family. As to quaternary structure, homooligomer. Oligomerizes into multimeric filamentous or ring-like structures by virtue of its stalk domain. Oligomerization is critical for GTPase activity, protein stability, and recognition of viral target structures. Interacts with TRPC1, TRPC3, TRPC4, TRPC5, TRPC6 and TRPC7. Interacts with HSPA5. Interacts with TUBB/TUBB5. Interacts with DDX39A and DDX39B. In terms of processing, ISGylated. Ubiquitously expressed.

The protein resides in the cytoplasm. It localises to the endoplasmic reticulum membrane. Its subcellular location is the perinuclear region. The protein localises to the nucleus. Interferon-induced dynamin-like GTPase with antiviral activity against rabies virus (RABV), vesicular stomatitis virus (VSV) and murine pneumonia virus (MPV). Isoform 1 but not isoform 2 shows antiviral activity against vesicular stomatitis virus (VSV). The polypeptide is Interferon-induced GTP-binding protein Mx1 (MX1) (Bos taurus (Bovine)).